We begin with the raw amino-acid sequence, 190 residues long: Potassium-transporting ATPase KdpC subunit (190 aa).

Residues 13–33 (VGFLLLTLMCGVVYPGIVTIF) form a helical membrane-spanning segment.

The protein belongs to the KdpC family. In terms of assembly, the system is composed of three essential subunits: KdpA, KdpB and KdpC.

It localises to the cell membrane. In terms of biological role, part of the high-affinity ATP-driven potassium transport (or Kdp) system, which catalyzes the hydrolysis of ATP coupled with the electrogenic transport of potassium into the cytoplasm. This subunit acts as a catalytic chaperone that increases the ATP-binding affinity of the ATP-hydrolyzing subunit KdpB by the formation of a transient KdpB/KdpC/ATP ternary complex. The polypeptide is Potassium-transporting ATPase KdpC subunit (Listeria monocytogenes serotype 4b (strain CLIP80459)).